A 254-amino-acid polypeptide reads, in one-letter code: 3-deoxy-manno-octulosonate cytidylyltransferase (254 aa).

It belongs to the KdsB family.

It is found in the cytoplasm. The enzyme catalyses 3-deoxy-alpha-D-manno-oct-2-ulosonate + CTP = CMP-3-deoxy-beta-D-manno-octulosonate + diphosphate. It functions in the pathway nucleotide-sugar biosynthesis; CMP-3-deoxy-D-manno-octulosonate biosynthesis; CMP-3-deoxy-D-manno-octulosonate from 3-deoxy-D-manno-octulosonate and CTP: step 1/1. The protein operates within bacterial outer membrane biogenesis; lipopolysaccharide biosynthesis. Functionally, activates KDO (a required 8-carbon sugar) for incorporation into bacterial lipopolysaccharide in Gram-negative bacteria. This is 3-deoxy-manno-octulosonate cytidylyltransferase from Ectopseudomonas mendocina (strain ymp) (Pseudomonas mendocina).